We begin with the raw amino-acid sequence, 344 residues long: Lipase chaperone (344 aa).

A helical membrane pass occupies residues 14–34 (VAVYGAVGLAAIAGVAIWSGA).

The protein belongs to the lipase chaperone family.

The protein localises to the cell inner membrane. In terms of biological role, may be involved in the folding of the extracellular lipase during its passage through the periplasm. The protein is Lipase chaperone of Burkholderia ambifaria (strain MC40-6).